The chain runs to 177 residues: Bifunctional protein PyrR (177 aa).

The PRPP-binding signature appears at 98–110; it reads IILVDDVIYTGRT.

Belongs to the purine/pyrimidine phosphoribosyltransferase family. PyrR subfamily. As to quaternary structure, homodimer and homohexamer; in equilibrium.

It catalyses the reaction UMP + diphosphate = 5-phospho-alpha-D-ribose 1-diphosphate + uracil. In terms of biological role, regulates transcriptional attenuation of the pyrimidine nucleotide (pyr) operon by binding in a uridine-dependent manner to specific sites on pyr mRNA. This disrupts an antiterminator hairpin in the RNA and favors formation of a downstream transcription terminator, leading to a reduced expression of downstream genes. Also displays a weak uracil phosphoribosyltransferase activity which is not physiologically significant. This Clostridium kluyveri (strain ATCC 8527 / DSM 555 / NBRC 12016 / NCIMB 10680 / K1) protein is Bifunctional protein PyrR.